A 618-amino-acid chain; its full sequence is Glutamine--fructose-6-phosphate aminotransferase [isomerizing] (618 aa).

The Nucleophile; for GATase activity role is filled by Cys-2. A Glutamine amidotransferase type-2 domain is found at Cys-2–Asp-226. Positions Trp-72 to Asn-91 are disordered. SIS domains are found at residues Asn-295–Lys-434 and Cys-467–Pro-608. Residue Lys-613 is the For Fru-6P isomerization activity of the active site.

As to quaternary structure, homodimer.

Its subcellular location is the cytoplasm. The enzyme catalyses D-fructose 6-phosphate + L-glutamine = D-glucosamine 6-phosphate + L-glutamate. Catalyzes the first step in hexosamine metabolism, converting fructose-6P into glucosamine-6P using glutamine as a nitrogen source. The protein is Glutamine--fructose-6-phosphate aminotransferase [isomerizing] of Methanosarcina mazei (strain ATCC BAA-159 / DSM 3647 / Goe1 / Go1 / JCM 11833 / OCM 88) (Methanosarcina frisia).